A 130-amino-acid chain; its full sequence is MAEKEKWGIANIYSSFNNTIITITDITGAETITQWSGGKVVRADRQESSPFAAMEAATRAADDAKEKGIVGLHIKVRAPGGNGPRTPGPGAQAAIRALARAGMRIGKIEDVTPIPHDGTGRPGGKRGRRV.

The disordered stretch occupies residues 108–130 (IEDVTPIPHDGTGRPGGKRGRRV).

The protein belongs to the universal ribosomal protein uS11 family. As to quaternary structure, part of the 30S ribosomal subunit.

Located on the platform of the 30S subunit. The sequence is that of Small ribosomal subunit protein uS11 from Methanothermobacter thermautotrophicus (strain ATCC 29096 / DSM 1053 / JCM 10044 / NBRC 100330 / Delta H) (Methanobacterium thermoautotrophicum).